The sequence spans 435 residues: Manganese transport system membrane protein MntC (435 aa).

9 consecutive transmembrane segments (helical) span residues 17–37 (VLAG…FVLL), 42–62 (LIGD…FLFT), 68–88 (PFFL…IQLI), 98–118 (SAIG…LTYI), 143–163 (QDII…IVFF), 166–186 (FTLI…VRFL), 189–209 (LLAC…GVIL), 228–248 (LTGM…AGTL), and 255–275 (GMAT…FSMI).

Belongs to the ABC-3 integral membrane protein family. As to quaternary structure, the complex is probably composed of two ATP-binding proteins (MntB), two transmembrane proteins (MntC and MntD) and a solute-binding protein (MntA).

It is found in the cell membrane. Its function is as follows. Probably part of the ABC transporter complex MntABCD involved in manganese import. Probably responsible for the translocation of the substrate across the membrane. The polypeptide is Manganese transport system membrane protein MntC (Bacillus subtilis (strain 168)).